A 661-amino-acid polypeptide reads, in one-letter code: PAN2-PAN3 deadenylation complex subunit PAN3 (661 aa).

Disordered regions lie at residues 1–26 and 53–130; these read MASA…AREN and DPHK…LRQD. The C3H1-type zinc finger occupies 26–55; sequence NAKDTLCRNITIYGRCRYEDKGCAFNHDPH. The segment covering 75-102 has biased composition (low complexity); sequence SFTPSLLSSNGSSPTSTPATTKKMTTIS. Polar residues predominate over residues 115–130; that stretch reads SVVSRSNASTPGLRQD. Residues 263–524 form a pseudokinase domain region; sequence QTLPNTQLPA…NIDIFITGIS (262 aa). Residues Arg-315, 364–371, and 424–425 contribute to the ATP site; these read DYHPLSKT and SK. The stretch at 525-563 forms a coiled coil; it reads SQLMSTFDSALHLDDQLTSDLSRELENGRLVRLMTKLNF. Residues 564-661 form a knob domain region; sequence VNERPEYEHD…ALMKPARRMH (98 aa).

It belongs to the protein kinase superfamily. PAN3 family. In terms of assembly, homodimer. Forms a heterotrimer with a catalytic subunit pan2 to form the poly(A)-nuclease (PAN) deadenylation complex. Interacts (via PAM-2 motif) with poly(A)-binding protein pab1 (via PABC domain), conferring substrate specificity of the enzyme complex.

The protein localises to the cytoplasm. In terms of biological role, regulatory subunit of the poly(A)-nuclease (PAN) deadenylation complex, one of two cytoplasmic mRNA deadenylases involved in mRNA turnover. PAN specifically shortens poly(A) tails of RNA and the activity is stimulated by poly(A)-binding protein pab1. PAN deadenylation is followed by rapid degradation of the shortened mRNA tails by the CCR4-NOT complex. Deadenylated mRNAs are then degraded by two alternative mechanisms, namely exosome-mediated 3'-5' exonucleolytic degradation, or deadenylation-dependent mRNA decaping and subsequent 5'-3' exonucleolytic degradation by xrn1. May also be involved in post-transcriptional maturation of mRNA poly(A) tails. pan3 acts as a positive regulator for PAN activity, recruiting the catalytic subunit pan2 to mRNA via its interaction with RNA and with pab1. The polypeptide is PAN2-PAN3 deadenylation complex subunit PAN3 (Neosartorya fischeri (strain ATCC 1020 / DSM 3700 / CBS 544.65 / FGSC A1164 / JCM 1740 / NRRL 181 / WB 181) (Aspergillus fischerianus)).